Consider the following 351-residue polypeptide: Dihydroorotate dehydrogenase (quinone) (351 aa).

FMN-binding positions include 67-71 (AGFDK) and Thr-91. Lys-71 provides a ligand contact to substrate. Residue 116-120 (NAMGF) participates in substrate binding. FMN is bound by residues Asn-145 and Asn-178. Asn-178 contacts substrate. Ser-181 serves as the catalytic Nucleophile. Substrate is bound at residue Asn-183. Residues Lys-214 and Thr-242 each contribute to the FMN site. 243–244 (NT) provides a ligand contact to substrate. Residues Gly-262, Gly-291, and 312–313 (YS) each bind FMN.

It belongs to the dihydroorotate dehydrogenase family. Type 2 subfamily. As to quaternary structure, monomer. The cofactor is FMN.

It localises to the cell membrane. It catalyses the reaction (S)-dihydroorotate + a quinone = orotate + a quinol. Its pathway is pyrimidine metabolism; UMP biosynthesis via de novo pathway; orotate from (S)-dihydroorotate (quinone route): step 1/1. Catalyzes the conversion of dihydroorotate to orotate with quinone as electron acceptor. This Helicobacter pylori (strain HPAG1) protein is Dihydroorotate dehydrogenase (quinone).